Here is a 165-residue protein sequence, read N- to C-terminus: Phosphopantetheine adenylyltransferase (165 aa).

Thr-10 provides a ligand contact to substrate. ATP-binding positions include 10-11 and His-18; that span reads TF. Substrate contacts are provided by Lys-42, Leu-74, and Arg-88. Residues 89–91, Glu-99, and 124–130 each bind ATP; these read GLR and NAFISSS.

Belongs to the bacterial CoaD family. In terms of assembly, homohexamer. Mg(2+) serves as cofactor.

The protein resides in the cytoplasm. It catalyses the reaction (R)-4'-phosphopantetheine + ATP + H(+) = 3'-dephospho-CoA + diphosphate. It functions in the pathway cofactor biosynthesis; coenzyme A biosynthesis; CoA from (R)-pantothenate: step 4/5. Functionally, reversibly transfers an adenylyl group from ATP to 4'-phosphopantetheine, yielding dephospho-CoA (dPCoA) and pyrophosphate. The sequence is that of Phosphopantetheine adenylyltransferase from Helicobacter hepaticus (strain ATCC 51449 / 3B1).